The chain runs to 215 residues: Large ribosomal subunit protein uL3 (215 aa).

The interval 136–155 is disordered; it reads GVSISHRSHGSTGQRQDPGK. Gln-151 is modified (N5-methylglutamine).

Belongs to the universal ribosomal protein uL3 family. As to quaternary structure, part of the 50S ribosomal subunit. Forms a cluster with proteins L14 and L19. Post-translationally, methylated by PrmB.

Functionally, one of the primary rRNA binding proteins, it binds directly near the 3'-end of the 23S rRNA, where it nucleates assembly of the 50S subunit. The polypeptide is Large ribosomal subunit protein uL3 (Rickettsia felis (strain ATCC VR-1525 / URRWXCal2) (Rickettsia azadi)).